Consider the following 208-residue polypeptide: MKYIEIDEELYRFIASKTERIGESASDILRRLLNLSVENVDVSLPTDISHPSLESQSPVNRHPVFDQAKAAVEKVIADQNSANEHYPVDEDIASSTSIDFDAMVSQHLLSQQKGAVGRFMYLLSSLESTAGSDFDKVLNVQGKGRLYFARSKQALLNSSKSSNPKEIASSGFWVTTNNNTAKKQTILTEVLEHLGCDSERAKSIAEHI.

The segment at 115-116 is interaction with DNA; the sequence is AV.

It belongs to the SeqA family. In terms of assembly, homodimer. Polymerizes to form helical filaments.

Its subcellular location is the cytoplasm. In terms of biological role, negative regulator of replication initiation, which contributes to regulation of DNA replication and ensures that replication initiation occurs exactly once per chromosome per cell cycle. Binds to pairs of hemimethylated GATC sequences in the oriC region, thus preventing assembly of replication proteins and re-initiation at newly replicated origins. Repression is relieved when the region becomes fully methylated. The polypeptide is Negative modulator of initiation of replication (Shewanella frigidimarina (strain NCIMB 400)).